Here is a 70-residue protein sequence, read N- to C-terminus: Large ribosomal subunit protein bL31 (70 aa).

Zn(2+)-binding residues include Cys-16, Cys-18, Cys-37, and Cys-40.

The protein belongs to the bacterial ribosomal protein bL31 family. Type A subfamily. As to quaternary structure, part of the 50S ribosomal subunit. Zn(2+) is required as a cofactor.

Functionally, binds the 23S rRNA. This is Large ribosomal subunit protein bL31 from Alteromonas mediterranea (strain DSM 17117 / CIP 110805 / LMG 28347 / Deep ecotype).